Reading from the N-terminus, the 106-residue chain is YcgL domain-containing protein HCH_02617 (106 aa).

The YcgL domain occupies 6–90 (RLISIFRSSK…VQDDYMMDVV (85 aa)).

This chain is YcgL domain-containing protein HCH_02617, found in Hahella chejuensis (strain KCTC 2396).